The chain runs to 803 residues: Zinc finger protein 226 (803 aa).

One can recognise a KRAB domain in the interval 8-78; sequence VTFKDVAVAF…TTATRRQGNL (71 aa). Residues 252 to 274 form a C2H2-type 1; degenerate zinc finger; sequence YQCNECKKPFSDLSSFDLHQQLQ. The segment at 280 to 302 adopts a C2H2-type 2; degenerate zinc-finger fold; it reads LTCVERGKGFCYSPVLPVHQKVH. C2H2-type zinc fingers lie at residues 307–329, 335–357, 363–385, 391–413, 419–441, 447–469, 475–497, 503–525, 531–553, 559–581, 587–609, 615–637, 643–665, 671–693, 699–721, 727–749, and 755–777; these read LKCDECGKEFSQGAHLQTHQKVH, YKCKQCGKGFSRRSALNVHCKVH, YNCEECGRAFSQASHLQDHQRLH, FKCDACGKSFSRNSHLQSHQRVH, YKCEECGKGFICSSNLYIHQRVH, YKCEECGKGFSRPSSLQAHQGVH, YICTVCGKGFTLSSNLQAHQRVH, YKCNECGKSFRRNSHYQVHLVVH, YKCEICGKGFSQSSYLQIHQKAH, FKCEECGQGFNQSSRLQIHQLIH, YKCEECGKGFSRRADLKIHCRIH, YNCEECGKVFRQASNLLAHQRVH, FKCEECGKSFGRSAHLQAHQKVH, YKCDECGKGFKWSLNLDMHQRVH, YKCGECGKYFSQASSLQLHQSVH, YKCDVCGKVFSRSSQLQSHQRVH, and YKCEICGKSFSWRSNLTVHHRIH. The disordered stretch occupies residues 781–803; sequence KSYKSNRGGKNIRESTQEKKSIK. The span at 791 to 803 shows a compositional bias: basic and acidic residues; the sequence is NIRESTQEKKSIK.

Belongs to the krueppel C2H2-type zinc-finger protein family.

The protein localises to the nucleus. Its function is as follows. May be involved in transcriptional regulation. This is Zinc finger protein 226 (ZNF226) from Homo sapiens (Human).